The following is a 507-amino-acid chain: ATP synthase subunit alpha (507 aa).

An ATP-binding site is contributed by 168–175 (GDRQTGKT).

It belongs to the ATPase alpha/beta chains family. In terms of assembly, F-type ATPases have 2 components, CF(1) - the catalytic core - and CF(0) - the membrane proton channel. CF(1) has five subunits: alpha(3), beta(3), gamma(1), delta(1), epsilon(1). CF(0) has three main subunits: a(1), b(2) and c(9-12). The alpha and beta chains form an alternating ring which encloses part of the gamma chain. CF(1) is attached to CF(0) by a central stalk formed by the gamma and epsilon chains, while a peripheral stalk is formed by the delta and b chains.

The protein resides in the cell membrane. The catalysed reaction is ATP + H2O + 4 H(+)(in) = ADP + phosphate + 5 H(+)(out). In terms of biological role, produces ATP from ADP in the presence of a proton gradient across the membrane. The alpha chain is a regulatory subunit. The protein is ATP synthase subunit alpha of Mesomycoplasma hyopneumoniae (strain 7448) (Mycoplasma hyopneumoniae).